Here is a 932-residue protein sequence, read N- to C-terminus: Alanine--tRNA ligase (932 aa).

Positions 623, 627, 726, and 730 each coordinate Zn(2+). Positions 893–916 (RVGGGGGGPPDFAQGGGPDVDSLD) are disordered. The span at 894-910 (VGGGGGGPPDFAQGGGP) shows a compositional bias: gly residues.

The protein belongs to the class-II aminoacyl-tRNA synthetase family. Zn(2+) is required as a cofactor.

It is found in the cytoplasm. It catalyses the reaction tRNA(Ala) + L-alanine + ATP = L-alanyl-tRNA(Ala) + AMP + diphosphate. Its function is as follows. Catalyzes the attachment of alanine to tRNA(Ala) in a two-step reaction: alanine is first activated by ATP to form Ala-AMP and then transferred to the acceptor end of tRNA(Ala). Also edits incorrectly charged Ser-tRNA(Ala) and Gly-tRNA(Ala) via its editing domain. The polypeptide is Alanine--tRNA ligase (Natronomonas pharaonis (strain ATCC 35678 / DSM 2160 / CIP 103997 / JCM 8858 / NBRC 14720 / NCIMB 2260 / Gabara) (Halobacterium pharaonis)).